The primary structure comprises 1365 residues: Nuclear pore complex protein Nup154 (1365 aa).

A required for binding to Nup93-1 and anchoring to the nuclear pore complex region spans residues 1-508 (MTLPQAQLDF…GTHIIEVLKM (508 aa)). Residues 508–986 (MVDVLRQILL…KSINPLKGTA (479 aa)) are required for binding to chromatin.

Belongs to the non-repetitive/WGA-negative nucleoporin family. As to quaternary structure, interacts (via N-terminus) with Nup93-1. Interacts with Nup35. Interacts with cup.

Its subcellular location is the nucleus. It localises to the nuclear pore complex. The protein localises to the chromosome. The protein resides in the nucleus membrane. It is found in the cytoplasm. Its function is as follows. Component of the nuclear pore complex. Has a role in the organization of the inner nuclear membrane proteins at the nuclear envelope. In germ cells, plays a role in the nuclear localization of components of the dpp signaling pathways, such as Medea and phosphorylated Mad. Binds to chromatin, and together with Nup62 and Nup93-1, contributes to karyosome morphology and chromatin organization including attachment to the nuclear envelope in oocytes and nurse cells. Has a role in female fertility including egg chamber development; in nurse cells, has a role in the organization of F-actin in subcortical and cytoplasmic actin filaments important for the transfer of cytoplasm from nurse cells to the growing oocytes. Has a role in male spermatogenesis and fertility. Has a role in germ line cell proliferation. This is Nuclear pore complex protein Nup154 from Drosophila melanogaster (Fruit fly).